Consider the following 1188-residue polypeptide: Phospholipid-transporting ATPase IB (1188 aa).

At 1 to 94 (MLNGAGLDKA…PRFLYEQIRR (94 aa)) the chain is on the cytoplasmic side. Thr45 bears the Phosphothreonine mark. Residues 95–115 (AANAFFLFIALLQQIPDVSPT) form a helical membrane-spanning segment. Residues 116 to 119 (GRYT) lie on the Extracellular side of the membrane. The helical transmembrane segment at 120 to 140 (TLVPLIIILTIAGIKEIVEDF) threads the bilayer. The Cytoplasmic segment spans residues 141 to 316 (KRHKADNAVN…SNVEKVTNVQ (176 aa)). The chain crosses the membrane as a helical span at residues 317-337 (ILVLFGILLVMALVSSAGALY). The Extracellular segment spans residues 338-364 (WNRSHGEKNWYIKKMDTTSDNFGYNLL). Residues 365 to 385 (TFIILYNNLIPISLLVTLEVV) traverse the membrane as a helical segment. The Cytoplasmic segment spans residues 386 to 887 (KYTQALFINW…CILYCFYKNV (502 aa)). Asp428 functions as the 4-aspartylphosphate intermediate in the catalytic mechanism. ATP contacts are provided by Asp428, Lys429, Thr430, Glu528, Phe569, Lys592, Arg625, Thr705, Gly706, Asp707, Arg795, and Lys801. Position 428 (Asp428) interacts with Mg(2+). Residue Thr430 participates in Mg(2+) binding. Asp821 lines the Mg(2+) pocket. 2 residues coordinate ATP: Asn824 and Asp825. Mg(2+) is bound at residue Asp825. A helical membrane pass occupies residues 888 to 908 (VLYIIELWFAFVNGFSGQILF). Over 909-910 (ER) the chain is Extracellular. The chain crosses the membrane as a helical span at residues 911-931 (WCIGLYNVIFTALPPFTLGIF). The Cytoplasmic segment spans residues 932-959 (ERSCTQESMLRFPQLYKITQNGEGFNTK). The chain crosses the membrane as a helical span at residues 960–980 (VFWGHCINALVHSLILFWFPM). Residues 981–997 (KALEHDTVLTSGHATDY) are Extracellular-facing. The chain crosses the membrane as a helical span at residues 998 to 1018 (LFVGNIVYTYVVVTVCLKAGL). Residues 1019-1028 (ETTAWTKFSH) are Cytoplasmic-facing. Residues 1029 to 1049 (LAVWGSMLTWLVFFGIYSTIW) form a helical membrane-spanning segment. Residues 1050–1063 (PTIPIAPDMRGQAT) lie on the Extracellular side of the membrane. Residues 1064 to 1084 (MVLSSAHFWLGLFLVPTACLI) form a helical membrane-spanning segment. Residues 1085-1188 (EDVAWRAAKH…DTTKKKSRKK (104 aa)) lie on the Cytoplasmic side of the membrane. The tract at residues 1162–1188 (SQEEHGAVSQEEVIRAYDTTKKKSRKK) is disordered. The span at 1163–1182 (QEEHGAVSQEEVIRAYDTTK) shows a compositional bias: basic and acidic residues.

It belongs to the cation transport ATPase (P-type) (TC 3.A.3) family. Type IV subfamily. Component of a P4-ATPase flippase complex which consists of a catalytic alpha subunit and an accessory beta subunit. Interacts with TMEM30A to form a flippase complex. It depends on Mg(2+) as a cofactor. As to expression, strongly expressed in the brain, cerebellum, retina and testis.

The protein localises to the membrane. It localises to the golgi apparatus membrane. The protein resides in the endosome membrane. Its subcellular location is the cell membrane. It is found in the photoreceptor outer segment membrane. The protein localises to the photoreceptor inner segment membrane. The catalysed reaction is ATP + H2O + phospholipidSide 1 = ADP + phosphate + phospholipidSide 2.. The enzyme catalyses a 1,2-diacyl-sn-glycero-3-phospho-L-serine(out) + ATP + H2O = a 1,2-diacyl-sn-glycero-3-phospho-L-serine(in) + ADP + phosphate + H(+). It carries out the reaction a 1,2-diacyl-sn-glycero-3-phosphoethanolamine(in) + ATP + H2O = a 1,2-diacyl-sn-glycero-3-phosphoethanolamine(out) + ADP + phosphate + H(+). Catalytic component of a P4-ATPase flippase complex which catalyzes the hydrolysis of ATP coupled to the transport of aminophospholipids from the outer to the inner leaflet of various membranes and ensures the maintenance of asymmetric distribution of phospholipids. Able to translocate phosphatidylserine, but not phosphatidylcholine. Phospholipid translocation also seems to be implicated in vesicle formation and in uptake of lipid signaling molecules. Reconstituted to liposomes, the ATP8A2:TMEM30A flippase complex predominantly transports phosphatidylserine (PS) and to a lesser extent phosphatidylethanolamine (PE). Phospholipid translocation is not associated with a countertransport of an inorganic ion or other charged substrate from the cytoplasmic side toward the exoplasm in connection with the phosphorylation from ATP. ATP8A2:TMEM30A may be involved in regulation of neurite outgrowth. Proposed to function in the generation and maintenance of phospholipid asymmetry in photoreceptor disk membranes and neuronal axon membranes. May be involved in vesicle trafficking in neuronal cells. Required for normal visual and auditory function; involved in photoreceptor and inner ear spiral ganglion cell survival. The protein is Phospholipid-transporting ATPase IB of Homo sapiens (Human).